The primary structure comprises 456 residues: GTPase Der (456 aa).

2 EngA-type G domains span residues 3–167 (FTIA…PETE) and 185–360 (IRVA…AVWN). Residues 9 to 16 (GRPNVGKS), 56 to 60 (DTAGL), 119 to 122 (NKSE), 191 to 198 (GRPNAGKS), 238 to 242 (DTAGL), and 303 to 306 (NKWD) each bind GTP. The KH-like domain maps to 361-445 (RRVPTAALNR…PVRITLREKA (85 aa)).

The protein belongs to the TRAFAC class TrmE-Era-EngA-EngB-Septin-like GTPase superfamily. EngA (Der) GTPase family. As to quaternary structure, associates with the 50S ribosomal subunit.

Its function is as follows. GTPase that plays an essential role in the late steps of ribosome biogenesis. This Bradyrhizobium sp. (strain BTAi1 / ATCC BAA-1182) protein is GTPase Der.